Reading from the N-terminus, the 119-residue chain is Large ribosomal subunit protein bL20 (119 aa).

This sequence belongs to the bacterial ribosomal protein bL20 family.

Binds directly to 23S ribosomal RNA and is necessary for the in vitro assembly process of the 50S ribosomal subunit. It is not involved in the protein synthesizing functions of that subunit. This chain is Large ribosomal subunit protein bL20, found in Acidithiobacillus ferrooxidans (strain ATCC 23270 / DSM 14882 / CIP 104768 / NCIMB 8455) (Ferrobacillus ferrooxidans (strain ATCC 23270)).